The chain runs to 123 residues: Ribosome-binding factor A (123 aa).

This sequence belongs to the RbfA family. As to quaternary structure, monomer. Binds 30S ribosomal subunits, but not 50S ribosomal subunits or 70S ribosomes.

The protein resides in the cytoplasm. One of several proteins that assist in the late maturation steps of the functional core of the 30S ribosomal subunit. Associates with free 30S ribosomal subunits (but not with 30S subunits that are part of 70S ribosomes or polysomes). Required for efficient processing of 16S rRNA. May interact with the 5'-terminal helix region of 16S rRNA. This is Ribosome-binding factor A from Prochlorococcus marinus (strain NATL1A).